A 1173-amino-acid chain; its full sequence is MARHGDTRSPSPVGSTYSSSRRSRRDDDRYERKRDDGRSYRRSRSPERRYRERDRDRDSYRRRDHSVDRRDSHRDEDNYRRRDRSRDRRRSRDRDHDRDYRRRSRSRDRDYRSRRDDSRDRVRRRTDDSADLKRKSRRDDSRDRTRGAEPKSREASTPAIPTRTGPTDDEKRAERLAKLEAWKQKQAAEKERKQKEAEASGGPRNILEEIDRKSGLSPAVSSPQSPATQGVDAAPAAYAGKFDPKAIAKNAAQTPAAPSVLGNDVAVPSSAKTSNAQTARVQASKASGNAPSPAVLKAKGNVGSFGLGTKQVADNEKSIATKTLGFGEEESTRRKLERLPTPPLDDADASKTAETNADDDDDVDMQDGETEEDAAAAARVAAERREERLQNESLTKTTNGNTTAKAEEADKMEVDAQEEELDPLDAFMSELAESAPPKKKAGAKFSKAQEPEAIFGDEHDVSMTAVGEGDAEDFLAIASKAKKKKDIPTVDHNKVEYEPFRRKFYTEPSDLAQMSEEEAANLRLELDGIKVRGLDVPKPVQKWSQCGLGIQTLDVIDKLGFASLTSIQAQAIPAIMSGRDVIGVAKTGSGKTMAFLIPMFRHIKDQRPLENMEGPIGLIMTPTRELATQIHKDCKPFLKALNLRAVCAYGGAPIKDQIAELKRGAEIIVCTPGRMIDLLAANAGRVTNLRRVTYVVLDEADRMFDMGFEPQVMKILSNVRPDRQTVLFSATFPRNMEALARKTLTKPIEIVVGGRSVVAPEITQIVEVCNEEKKFVRLLELLGNLYSTDENEDARSLIFVDRQEAADTLLRELMRKGYPCMSIHGGKDQIDRDSTIEDFKAGIFPVLIATSVAARGLDVKQLKLVVNYDAPNHLEDYVHRAGRTGRAGNTGTAVTFLTEDQERYSVDIAKALKQSGQEVPEAVQKLVDSFLEKVKAGKEKASNSGFGGKGLERLDQERDAARMRERRTYKTGEEGEDEEEKDEKKNEQAEEQFNKVLSAVQSTSAQLPGVPKGIDLDGKITVHKREVDPNAPNNPLDKVGSAVADIHARLSRAGVMRSGVPIDNRGPDAGAFHATLEINDFPQKARWAVTNRTNVAKILEATGTSITTKGSFYPAGKEPGPGENPKLYILVEGETELSVTNAMRELMRLLKEGTIAAVDSESRAPASGRYSVV.

Disordered regions lie at residues 1–232 and 268–418; these read MARH…QGVD and PSSA…DAQE. Residues 8–20 show a composition bias toward low complexity; the sequence is RSPSPVGSTYSSS. 3 stretches are compositionally biased toward basic and acidic residues: residues 24–100, 107–154, and 166–198; these read RRDD…DRDY, RDRD…KSRE, and PTDD…KEAE. Composition is skewed to polar residues over residues 219-228 and 270-290; these read AVSSPQSPAT and SAKT…SGNA. The span at 356–374 shows a compositional bias: acidic residues; the sequence is NADDDDDVDMQDGETEEDA. A compositionally biased stretch (basic and acidic residues) spans 381-390; sequence AAERREERLQ. The segment covering 395–404 has biased composition (low complexity); the sequence is TKTTNGNTTA. The span at 405–414 shows a compositional bias: basic and acidic residues; sequence KAEEADKMEV. Positions 541–569 match the Q motif motif; it reads QKWSQCGLGIQTLDVIDKLGFASLTSIQA. One can recognise a Helicase ATP-binding domain in the interval 572–750; sequence IPAIMSGRDV…RKTLTKPIEI (179 aa). An ATP-binding site is contributed by 585–592; it reads AKTGSGKT. A DEAD box motif is present at residues 698–701; that stretch reads DEAD. A Helicase C-terminal domain is found at 761 to 927; the sequence is EITQIVEVCN…EVPEAVQKLV (167 aa). Positions 938-989 are disordered; it reads KEKASNSGFGGKGLERLDQERDAARMRERRTYKTGEEGEDEEEKDEKKNEQA. Positions 950-973 are enriched in basic and acidic residues; sequence GLERLDQERDAARMRERRTYKTGE.

The protein belongs to the DEAD box helicase family. DDX46/PRP5 subfamily.

It is found in the nucleus. It carries out the reaction ATP + H2O = ADP + phosphate + H(+). ATP-dependent RNA helicase involved spliceosome assembly and in nuclear splicing. Catalyzes an ATP-dependent conformational change of U2 snRNP. Bridges U1 and U2 snRNPs and enables stable U2 snRNP association with intron RNA. This chain is Pre-mRNA-processing ATP-dependent RNA helicase prp5 (prp5), found in Emericella nidulans (strain FGSC A4 / ATCC 38163 / CBS 112.46 / NRRL 194 / M139) (Aspergillus nidulans).